A 153-amino-acid polypeptide reads, in one-letter code: MNKGCGSGSDSCLSSMEEELHVLAVDDNLIDRKLVERILKISSCKVTTAENGLRALEYLGLGDPQQTDSLTNVMKVNLIITDYCMPGMTGFELLKKVKESSNLKEVPVVILSSENIPTRINKCLASGAQMFMQKPLKLSDVEKLKCHLLNCRS.

The region spanning 21-149 is the Response regulatory domain; sequence HVLAVDDNLI…DVEKLKCHLL (129 aa). At aspartate 82 the chain carries 4-aspartylphosphate.

It belongs to the ARR family. Type-A subfamily. Two-component system major event consists of a His-to-Asp phosphorelay between a sensor histidine kinase (HK) and a response regulator (RR). In plants, the His-to-Asp phosphorelay involves an additional intermediate named Histidine-containing phosphotransfer protein (HPt). This multistep phosphorelay consists of a His-Asp-His-Asp sequential transfer of a phosphate group between first a His and an Asp of the HK protein, followed by the transfer to a conserved His of the HPt protein and finally the transfer to an Asp in the receiver domain of the RR protein.

The protein resides in the nucleus. Functions as a response regulator involved in His-to-Asp phosphorelay signal transduction system. Phosphorylation of the Asp residue in the receiver domain activates the ability of the protein to promote the transcription of target genes. Type-A response regulators seem to act as negative regulators of the cytokinin signaling. In Arabidopsis thaliana (Mouse-ear cress), this protein is Two-component response regulator ARR17 (ARR17).